Here is a 59-residue protein sequence, read N- to C-terminus: Cecropin-A1 (59 aa).

An N-terminal signal peptide occupies residues 1–23 (MNFTKLFAIVLLAALVLLGQTEA).

This sequence belongs to the cecropin family.

The protein resides in the secreted. In terms of biological role, cecropins have lytic and antibacterial activity against several Gram-positive and Gram-negative bacteria. This Aedes albopictus (Asian tiger mosquito) protein is Cecropin-A1 (CECA1).